The sequence spans 560 residues: Hypermethylated in cancer 2 protein (560 aa).

The region spanning 24–87 (CDVIIVVENA…IYTGKLLSSD (64 aa)) is the BTB domain. Disordered regions lie at residues 122 to 163 (RSLL…KTKR) and 183 to 367 (HCTT…GGRN). 2 stretches are compositionally biased toward polar residues: residues 126–153 (NKPT…NQMS) and 183–203 (HCTT…NGSC). Over residues 224-242 (EEVSPSSIPQESPQSASES) the composition is skewed to low complexity. Over residues 243–259 (TANSASFDENPNTQNLT) the composition is skewed to polar residues. Over residues 296–308 (PKSEGKKGEDMER) the composition is skewed to basic and acidic residues. Low complexity predominate over residues 348–362 (ENGQEQSEESGQSEN). 5 C2H2-type zinc fingers span residues 387–409 (YVCI…VETH), 450–472 (FSCS…EKTH), 478–500 (FPCN…MRSH), 506–528 (FACE…MRVH), and 534–556 (YECQ…LRMH).

Belongs to the krueppel C2H2-type zinc-finger protein family. Hic subfamily.

It localises to the nucleus. In terms of biological role, transcriptional repressor. This chain is Hypermethylated in cancer 2 protein (hic2), found in Danio rerio (Zebrafish).